The following is a 281-amino-acid chain: Sorbose reductase SOU1 (281 aa).

NADP(+) contacts are provided by Ile-47, Lys-74, and Asn-119. Catalysis depends on proton donor residues Ser-173 and Tyr-188. 4 residues coordinate NADP(+): Tyr-188, Lys-192, Ile-221, and Thr-223. Lys-192 serves as the catalytic Lowers pKa of active site Tyr.

This sequence belongs to the short-chain dehydrogenases/reductases (SDR) family. Homotetramer.

The catalysed reaction is D-sorbitol + NADP(+) = keto-L-sorbose + NADPH + H(+). The protein operates within carbohydrate degradation; L-sorbose degradation. Catalyzes the NADP dependent reduction of L-sorbose to D-glucitol. Can also convert fructose to mannitol, but less efficiently. This Candida albicans (strain SC5314 / ATCC MYA-2876) (Yeast) protein is Sorbose reductase SOU1 (SOU1).